The following is a 274-amino-acid chain: Mitochondrial S-adenosylmethionine carrier protein (274 aa).

Solcar repeat units follow at residues 4 to 77 (PGFT…VKSL), 86 to 168 (FKPV…LKAL), and 177 to 265 (VDSW…ARSL). 6 helical membrane passes run 5 to 25 (GFTASLVAGGVAGVSVDLILF), 49 to 69 (IYAGVPSAAVGSFPNAAAFFL), 85 to 105 (HFKPVKHMLAASTGEVVACLI), 142 to 162 (RGYKSTVLREIPFSLVQFPLW), 182 to 202 (SAVCGAFAGGFAAAVTTPLDV), and 238 to 258 (FAGVLPRMAAISMGGFIFLGA).

It belongs to the mitochondrial carrier (TC 2.A.29) family.

The protein localises to the mitochondrion inner membrane. The enzyme catalyses S-adenosyl-L-homocysteine(out) + S-adenosyl-L-methionine(in) = S-adenosyl-L-homocysteine(in) + S-adenosyl-L-methionine(out). Functionally, mitochondrial S-adenosyl-L-methionine/S-adenosyl-L-homocysteine antiporter. Mediates the exchange of cytosolic S-adenosyl-L-methionine, the predominant methyl-group donor for macromolecule methylation processes, for mitochondrial S-adenosylhomocysteine(SAH), a by-product of methylation reactions. This chain is Mitochondrial S-adenosylmethionine carrier protein, found in Mus musculus (Mouse).